A 194-amino-acid polypeptide reads, in one-letter code: Peptidyl-tRNA hydrolase (194 aa).

Tyrosine 16 is a binding site for tRNA. The active-site Proton acceptor is histidine 21. TRNA is bound by residues phenylalanine 67, asparagine 69, and asparagine 115.

The protein belongs to the PTH family. As to quaternary structure, monomer.

The protein resides in the cytoplasm. The catalysed reaction is an N-acyl-L-alpha-aminoacyl-tRNA + H2O = an N-acyl-L-amino acid + a tRNA + H(+). In terms of biological role, hydrolyzes ribosome-free peptidyl-tRNAs (with 1 or more amino acids incorporated), which drop off the ribosome during protein synthesis, or as a result of ribosome stalling. Catalyzes the release of premature peptidyl moieties from peptidyl-tRNA molecules trapped in stalled 50S ribosomal subunits, and thus maintains levels of free tRNAs and 50S ribosomes. The sequence is that of Peptidyl-tRNA hydrolase from Shigella dysenteriae serotype 1 (strain Sd197).